A 781-amino-acid chain; its full sequence is DEAD-box ATP-dependent RNA helicase 50 (781 aa).

Disordered stretches follow at residues 72–103 (EFAP…LTAS), 117–148 (GKVT…DEGF), 166–240 (IPRS…KGDR), 254–292 (GRAI…REDR), and 313–342 (YNPR…RGWG). Positions 79–88 (SDLLSSIPSE) are enriched in low complexity. Residues 130-143 (EEEDEDDASDENYS) are compositionally biased toward acidic residues. A compositionally biased stretch (basic and acidic residues) spans 171–197 (KSAERNEVKRASKVRESRESRRDLDRL). The segment covering 198 to 208 (EGDDEDVDEVS) has biased composition (acidic residues). Residues 216–226 (NQRAGSRSSYS) are compositionally biased toward polar residues. Basic and acidic residues predominate over residues 254–274 (GRAIDEVSNPRKFNDNERAES). Low complexity predominate over residues 275–286 (RSSYSRDSSANS). Positions 313-325 (YNPRRFTDNERGL) are enriched in basic and acidic residues. Positions 374–402 (KTFAEIGCSEDMMKALKEQNFDRPAHIQA) match the Q motif motif. Positions 405–586 (FSPVIDGKSC…VEVFPDCEVV (182 aa)) constitute a Helicase ATP-binding domain. Residue 418–425 (DQSGSGKT) coordinates ATP. The DEAD box signature appears at 533–536 (DEVD). Residues 621-781 (NKKTALLQIM…DVPNAYEFTT (161 aa)) enclose the Helicase C-terminal domain.

This sequence belongs to the DEAD box helicase family.

The catalysed reaction is ATP + H2O = ADP + phosphate + H(+). Its function is as follows. Probably involved in resistance to biotic and abiotic stresses. The protein is DEAD-box ATP-dependent RNA helicase 50 (RH50) of Arabidopsis thaliana (Mouse-ear cress).